The chain runs to 178 residues: Small ribosomal subunit protein uS4 (178 aa).

An S4 RNA-binding domain is found at 104–166 (RRLQTIVYRK…PNSPMASENH (63 aa)). Residues 158–178 (NSPMASENHPERTAAVSEENQ) form a disordered region.

Belongs to the universal ribosomal protein uS4 family. As to quaternary structure, part of the 30S ribosomal subunit. Contacts protein S5. The interaction surface between S4 and S5 is involved in control of translational fidelity.

One of the primary rRNA binding proteins, it binds directly to 16S rRNA where it nucleates assembly of the body of the 30S subunit. Functionally, with S5 and S12 plays an important role in translational accuracy. The sequence is that of Small ribosomal subunit protein uS4 from Methanococcus maripaludis (strain C6 / ATCC BAA-1332).